The primary structure comprises 324 residues: NADH-cytochrome b5 reductase 1 (324 aa).

A helical transmembrane segment spans residues 49–69 (LNIVLAFVVGLIGSVVVLLYF). An FAD-binding FR-type domain is found at 81–184 (TQWQQYRLME…KGPKGQMRYA (104 aa)). FAD-binding positions include 164–179 (GSMK…GPKG) and 190–222 (HIGM…QIDF).

Belongs to the flavoprotein pyridine nucleotide cytochrome reductase family. In terms of assembly, monomer. Component of the 2-(3-amino-3-carboxypropyl)histidine synthase complex composed of DPH1, DPH2, DPH3 and a NADH-dependent reductase, predominantly CBR1. Requires FAD as cofactor.

The protein resides in the mitochondrion outer membrane. It catalyses the reaction 2 Fe(III)-[cytochrome b5] + NADH = 2 Fe(II)-[cytochrome b5] + NAD(+) + H(+). It carries out the reaction 2 Fe(3+)-[Dph3] + NADH = 2 Fe(2+)-[Dph3] + NAD(+) + H(+). It participates in protein modification; peptidyl-diphthamide biosynthesis. NADH-dependent reductase for DPH3 and cytochrome b5. Required for the first step of diphthamide biosynthesis, a post-translational modification of histidine which occurs in elongation factor 2. DPH1 and DPH2 transfer a 3-amino-3-carboxypropyl (ACP) group from S-adenosyl-L-methionine (SAM) to a histidine residue, the reaction is assisted by a reduction system comprising DPH3 and a NADH-dependent reductase, predominantly CBR1. By reducing DPH3, also involved in the formation of the tRNA wobble base modification mcm5s 2U (5-methoxycarbonylmethyl-2-thiouridine), mediated by the elongator complex. The cytochrome b5/NADH cytochrome b5 reductase electron transfer system supports the catalytic activity of several sterol biosynthetic enzymes. This Mycosarcoma maydis (Corn smut fungus) protein is NADH-cytochrome b5 reductase 1 (CBR1).